We begin with the raw amino-acid sequence, 73 residues long: Conotoxin Cl9.2 (73 aa).

An N-terminal signal peptide occupies residues 1–18 (MSKLVILAVLVLLPLVTA). Positions 19–41 (EHGRDEQAMQPEKKTMWTLWSLT) are excised as a propeptide. Disulfide bonds link cysteine 46–cysteine 61, cysteine 52–cysteine 63, and cysteine 58–cysteine 72.

Expressed by the venom duct.

It localises to the secreted. In Californiconus californicus (California cone), this protein is Conotoxin Cl9.2.